We begin with the raw amino-acid sequence, 376 residues long: Putative F-box protein At2g33200 (376 aa).

In terms of domain architecture, F-box spans 6–53 (YDWSKLCHDILRLILESLHYKDYHRARTVCSNWYTASTTCKRPLYPWR).

The chain is Putative F-box protein At2g33200 from Arabidopsis thaliana (Mouse-ear cress).